The following is a 375-amino-acid chain: POU domain, class 3, transcription factor 1 (375 aa).

Disordered regions lie at residues 1-29 (MAAT…RMHQ), 56-139 (MSLT…QPLI), and 151-200 (MLGP…PSSD). Composition is skewed to polar residues over residues 107-117 (VHQQTPSSHAW), 130-139 (PGSNSHQPLI), and 151-160 (MLGPQASSLH). Positions 162–171 (SMRDPLHDDP) are enriched in basic and acidic residues. One can recognise a POU-specific domain in the interval 194-268 (EDAPSSDDLE…LLNKWLEETD (75 aa)). Residues 286–345 (KRKKRTSIEVGVKGALENHFLKCPKPSAHEITSLADSLQLEKEVVRVWFCNRRQKEKRMT) constitute a DNA-binding region (homeobox).

This sequence belongs to the POU transcription factor family. Class-3 subfamily.

Its subcellular location is the nucleus. Acts as a transcription factor. May play a role in neuronal differentiation. The polypeptide is POU domain, class 3, transcription factor 1 (Xenopus tropicalis (Western clawed frog)).